Consider the following 296-residue polypeptide: Enoyl-CoA hydratase ACTT3 (296 aa).

Positions 294 to 296 (PKL) match the Peroxisomal targeting signal type 1 motif.

It belongs to the enoyl-CoA hydratase/isomerase family.

Its subcellular location is the peroxisome. The catalysed reaction is a (3S)-3-hydroxyacyl-CoA = a (2E)-enoyl-CoA + H2O. The enzyme catalyses a 4-saturated-(3S)-3-hydroxyacyl-CoA = a (3E)-enoyl-CoA + H2O. It participates in mycotoxin biosynthesis. Enoyl-CoA hydratase; part of the gene clusters that mediate the biosynthesis of the host-selective toxins (HSTs) ACT-toxins responsible for brown spot of tangerine disease by the tangerine pathotype which affects tangerines and mandarins. ACT-toxins consist of three moieties, 9,10-epoxy-8-hydroxy-9-methyl-decatrienoic acid (EDA), valine and a polyketide. ACT-toxin I is toxic to both citrus and pear; toxin II the 5''-deoxy derivative of ACT-toxin I, is highly toxic to pear and slightly toxic to citrus. On cellular level, ACT-toxins affect plasma membrane of susceptible cells and cause a sudden increase in loss of K(+) after a few minutes of toxin treatment. The acyl-CoA ligase ACTT1, the hydrolase ACTT2, the enoyl-CoA hydratases ACTT3 and ACTT6, and the acyl-CoA synthetase ACTT5 are all involved in the biosynthesis of the AK-, AF- and ACT-toxin common 9,10-epoxy-8-hydroxy-9-methyl-decatrienoic acid (EDA) structural moiety. The exact role of each enzyme, and of additional enzymes identified within the AF-toxin clusters have still to be determined. On the other hand, ACTTS1 to ACTTS4 are specific to the tangerine pathotype. The function of ACTTS3 is to elongate the polyketide chain portion of ACT-toxin that is unique to this toxin. The enoyl-reductase ACTTS2 might complement the missing enoyl-reductase (ER) domain in ACTTS3 in the synthesis of the polyketide portion of ACT-toxin. The roles of the nonribosomal peptide synthetases-related proteins ACTTS1 and ACTTS4 have also still not been elucidated. This is Enoyl-CoA hydratase ACTT3 from Alternaria alternata (Alternaria rot fungus).